Consider the following 427-residue polypeptide: Peptidase B (427 aa).

Lys-195 and Asp-200 together coordinate Mn(2+). The active site involves Lys-207. Positions 218, 277, and 279 each coordinate Mn(2+). Arg-281 is an active-site residue.

This sequence belongs to the peptidase M17 family. Homohexamer. Mn(2+) serves as cofactor.

Its subcellular location is the cytoplasm. The enzyme catalyses Release of an N-terminal amino acid, Xaa, from a peptide or arylamide. Xaa is preferably Glu or Asp but may be other amino acids, including Leu, Met, His, Cys and Gln.. Functionally, probably plays an important role in intracellular peptide degradation. This is Peptidase B from Escherichia coli O139:H28 (strain E24377A / ETEC).